A 160-amino-acid polypeptide reads, in one-letter code: Non-secretory ribonuclease (160 aa).

The N-terminal stretch at 1-27 is a signal peptide; the sequence is MVPKLFTSPICLLLLLGLMGVEGSLHA. A C-linked (Man) tryptophan glycan is attached at Trp-34. His-42 acts as the Proton acceptor in catalysis. Asn-44 is a glycosylation site (N-linked (GlcNAc...) asparagine). Cystine bridges form between Cys-50–Cys-110, Cys-64–Cys-122, Cys-82–Cys-137, and Cys-89–Cys-98. The residue at position 60 (Tyr-60) is a 3'-nitrotyrosine. 65–69 is a binding site for substrate; the sequence is KNQNT. Asn-92, Asn-111, and Asn-138 each carry an N-linked (GlcNAc...) asparagine glycan. Residue His-155 is the Proton donor of the active site.

It belongs to the pancreatic ribonuclease family. Interacts with and forms a tight 1:1 complex with RNH1. Dimerization of two such complexes may occur.

The protein resides in the lysosome. It localises to the cytoplasmic granule. The enzyme catalyses an [RNA] containing cytidine + H2O = an [RNA]-3'-cytidine-3'-phosphate + a 5'-hydroxy-ribonucleotide-3'-[RNA].. It catalyses the reaction an [RNA] containing uridine + H2O = an [RNA]-3'-uridine-3'-phosphate + a 5'-hydroxy-ribonucleotide-3'-[RNA].. In terms of biological role, this is a non-secretory ribonuclease. It is a pyrimidine specific nuclease with a slight preference for U. Cytotoxin and helminthotoxin. Possesses a wide variety of biological activities. The sequence is that of Non-secretory ribonuclease (RNASE2) from Macaca nemestrina (Pig-tailed macaque).